Consider the following 249-residue polypeptide: MASLGVNIDHIANVRQARRTVEPDPVPMALMAELGGADGITIHLREDRRHIQDRDLTLLGQTVRTRLNLEMAATTEMVEIALREQPDMVTLVPERREEVTTEGGLDVRSQCKSLSSVIDTLQSNDIPVSLFVDPDRNQLEACQQSGARWVELHTGRYAEASWREQPITLARLIEATEQARSMGLRVNAGHGLTYQNVEPIAAIAGMEELNIGHTIVARALCVGLQEAVREMKCLVQNPRRDPLFGSTSS.

Asn7 lines the 3-amino-2-oxopropyl phosphate pocket. 9–10 (DH) is a 1-deoxy-D-xylulose 5-phosphate binding site. Arg18 is a binding site for 3-amino-2-oxopropyl phosphate. His43 functions as the Proton acceptor in the catalytic mechanism. Positions 45 and 50 each coordinate 1-deoxy-D-xylulose 5-phosphate. Residue Glu70 is the Proton acceptor of the active site. Thr100 serves as a coordination point for 1-deoxy-D-xylulose 5-phosphate. His190 serves as the catalytic Proton donor. Residues Gly191 and 212–213 (GH) each bind 3-amino-2-oxopropyl phosphate.

Belongs to the PNP synthase family. In terms of assembly, homooctamer; tetramer of dimers.

The protein resides in the cytoplasm. It catalyses the reaction 3-amino-2-oxopropyl phosphate + 1-deoxy-D-xylulose 5-phosphate = pyridoxine 5'-phosphate + phosphate + 2 H2O + H(+). The protein operates within cofactor biosynthesis; pyridoxine 5'-phosphate biosynthesis; pyridoxine 5'-phosphate from D-erythrose 4-phosphate: step 5/5. Its function is as follows. Catalyzes the complicated ring closure reaction between the two acyclic compounds 1-deoxy-D-xylulose-5-phosphate (DXP) and 3-amino-2-oxopropyl phosphate (1-amino-acetone-3-phosphate or AAP) to form pyridoxine 5'-phosphate (PNP) and inorganic phosphate. This Synechococcus sp. (strain CC9311) protein is Pyridoxine 5'-phosphate synthase.